The following is a 323-amino-acid chain: Beta-ketoacyl-[acyl-carrier-protein] synthase III (323 aa).

Residues Cys114 and His250 contribute to the active site. The tract at residues 251-255 (QANLR) is ACP-binding. Asn280 is an active-site residue.

It belongs to the thiolase-like superfamily. FabH family. As to quaternary structure, homodimer.

The protein resides in the cytoplasm. It carries out the reaction malonyl-[ACP] + acetyl-CoA + H(+) = 3-oxobutanoyl-[ACP] + CO2 + CoA. Its pathway is lipid metabolism; fatty acid biosynthesis. In terms of biological role, catalyzes the condensation reaction of fatty acid synthesis by the addition to an acyl acceptor of two carbons from malonyl-ACP. Catalyzes the first condensation reaction which initiates fatty acid synthesis and may therefore play a role in governing the total rate of fatty acid production. Possesses both acetoacetyl-ACP synthase and acetyl transacylase activities. Its substrate specificity determines the biosynthesis of branched-chain and/or straight-chain of fatty acids. The polypeptide is Beta-ketoacyl-[acyl-carrier-protein] synthase III (Cereibacter sphaeroides (strain ATCC 17025 / ATH 2.4.3) (Rhodobacter sphaeroides)).